Reading from the N-terminus, the 272-residue chain is Acetylglutamate kinase (272 aa).

Substrate is bound by residues 46 to 47 (GA), arginine 68, and asparagine 166.

The protein belongs to the acetylglutamate kinase family. ArgB subfamily.

It is found in the cytoplasm. It catalyses the reaction N-acetyl-L-glutamate + ATP = N-acetyl-L-glutamyl 5-phosphate + ADP. It functions in the pathway amino-acid biosynthesis; L-arginine biosynthesis; N(2)-acetyl-L-ornithine from L-glutamate: step 2/4. Its function is as follows. Catalyzes the ATP-dependent phosphorylation of N-acetyl-L-glutamate. This is Acetylglutamate kinase from Dehalococcoides mccartyi (strain CBDB1).